A 617-amino-acid chain; its full sequence is Proline--tRNA ligase (617 aa).

The protein belongs to the class-II aminoacyl-tRNA synthetase family. ProS type 1 subfamily. In terms of assembly, homodimer.

Its subcellular location is the cytoplasm. It catalyses the reaction tRNA(Pro) + L-proline + ATP = L-prolyl-tRNA(Pro) + AMP + diphosphate. Catalyzes the attachment of proline to tRNA(Pro) in a two-step reaction: proline is first activated by ATP to form Pro-AMP and then transferred to the acceptor end of tRNA(Pro). As ProRS can inadvertently accommodate and process non-cognate amino acids such as alanine and cysteine, to avoid such errors it has two additional distinct editing activities against alanine. One activity is designated as 'pretransfer' editing and involves the tRNA(Pro)-independent hydrolysis of activated Ala-AMP. The other activity is designated 'posttransfer' editing and involves deacylation of mischarged Ala-tRNA(Pro). The misacylated Cys-tRNA(Pro) is not edited by ProRS. This chain is Proline--tRNA ligase, found in Streptococcus pneumoniae (strain ATCC BAA-255 / R6).